Consider the following 485-residue polypeptide: Aspartyl/glutamyl-tRNA(Asn/Gln) amidotransferase subunit B (485 aa).

It belongs to the GatB/GatE family. GatB subfamily. As to quaternary structure, heterotrimer of A, B and C subunits.

The enzyme catalyses L-glutamyl-tRNA(Gln) + L-glutamine + ATP + H2O = L-glutaminyl-tRNA(Gln) + L-glutamate + ADP + phosphate + H(+). It catalyses the reaction L-aspartyl-tRNA(Asn) + L-glutamine + ATP + H2O = L-asparaginyl-tRNA(Asn) + L-glutamate + ADP + phosphate + 2 H(+). Its function is as follows. Allows the formation of correctly charged Asn-tRNA(Asn) or Gln-tRNA(Gln) through the transamidation of misacylated Asp-tRNA(Asn) or Glu-tRNA(Gln) in organisms which lack either or both of asparaginyl-tRNA or glutaminyl-tRNA synthetases. The reaction takes place in the presence of glutamine and ATP through an activated phospho-Asp-tRNA(Asn) or phospho-Glu-tRNA(Gln). The chain is Aspartyl/glutamyl-tRNA(Asn/Gln) amidotransferase subunit B from Bordetella avium (strain 197N).